The sequence spans 63 residues: UPF0434 protein Sde_1297 (63 aa).

It belongs to the UPF0434 family.

This Saccharophagus degradans (strain 2-40 / ATCC 43961 / DSM 17024) protein is UPF0434 protein Sde_1297.